A 263-amino-acid chain; its full sequence is Norsolorinic acid ketoreductase stcE (263 aa).

NADP(+) contacts are provided by Leu29, Asp76, Asn105, Tyr177, Lys181, Ile208, and Ser210. Tyr177 functions as the Proton donor in the catalytic mechanism. Lys181 acts as the Lowers pKa of active site Tyr in catalysis.

Belongs to the short-chain dehydrogenases/reductases (SDR) family.

The catalysed reaction is (1'S)-averantin + NADP(+) = norsolorinic acid + NADPH + H(+). Its pathway is mycotoxin biosynthesis; sterigmatocystin biosynthesis. Its function is as follows. Short chain dehydrogenase; part of the gene cluster that mediates the biosynthesis of sterigmatocystin (ST), a polyketide-derived furanocoumarin which is part of the most toxic and carcinogenic compounds among the known mycotoxins. The first step in the biosynthesis of sterigmatocystin is the production of hexanoate by the fatty acid synthase (FAS) units stcJ and stcK. The polyketide backbone is assembled by the non-reducing polyketide synthase stcA by condensation of the starter hexanoyl-CoA and 7 malonyl-CoA extender units followed by cyclization and release of norsolorinic acid. Norsolorinic acid is the first stable intermediate in the biosynthesis of sterigmatocystin and is converted into averantin (AVN) by the ketoreductase stcE which reduces the hexanoate ketone to an alcohol. Averantin is then oxidized into 5'-hydroxyaverantin (HAVN) by the cytochrome P450 monooxygenase stcF. 5'-hydroxyaverantin is further converted to 5'-oxyaverantin (OAVN) by the 5'-hydroxyaverantin dehydrogenase stcG. The next step is the conversion of OAVN into averufin (AVF) which is catalyzed by a yet to be identified enzyme. The cytochrome P450 monooxygenase stcB and the flavin-binding monooxygenase stcW are both required for the conversion of averufin to 1-hydroxyversicolorone. The esterase stcI probably catalyzes the formation of versiconal hemiacetal acetate from 1-hydroxyversicolorone. The oxydoreductase stcN then probably catalyzes the biosynthetic step from versiconal to versicolorin B (VERB). The next step is performed by the versicolorin B desaturase stcL to produce versicolorin A (VERA). The ketoreductase stcU and the cytochrome P450 monooxygenase stcS are involved in the conversion of versicolorin A to demethylsterigmatocystin. The Baeyer-Villiger oxidas stcQ and the reductase stcR might be involved in the biosynthetic step from versicolorin A to demethylsterigmatocystin. The final step in the biosynthesis of sterigmatocystin is the methylation of demethylsterigmatocystin catalyzed by the methyltransferase stcP. This is Norsolorinic acid ketoreductase stcE from Emericella nidulans (strain FGSC A4 / ATCC 38163 / CBS 112.46 / NRRL 194 / M139) (Aspergillus nidulans).